Here is a 277-residue protein sequence, read N- to C-terminus: Undecaprenyl-diphosphatase (277 aa).

Helical transmembrane passes span 19–39 (FLPV…PFYG), 44–64 (FDDL…LFLY), 89–109 (FHFL…GFIA), 122–142 (LLEI…VAEW), 154–174 (IGFK…IPGM), 195–215 (AEFS…YKLI), 224–244 (NTIP…TLVI), and 257–277 (SVFG…TKLI).

It belongs to the UppP family.

The protein localises to the cell inner membrane. The catalysed reaction is di-trans,octa-cis-undecaprenyl diphosphate + H2O = di-trans,octa-cis-undecaprenyl phosphate + phosphate + H(+). Functionally, catalyzes the dephosphorylation of undecaprenyl diphosphate (UPP). Confers resistance to bacitracin. This chain is Undecaprenyl-diphosphatase, found in Leptospira interrogans serogroup Icterohaemorrhagiae serovar copenhageni (strain Fiocruz L1-130).